Here is a 189-residue protein sequence, read N- to C-terminus: uncharacterized protein (189 aa).

The signal sequence occupies residues 1–19 (MKRVLFFLLMIFVSFGVIA).

This is an uncharacterized protein from Escherichia coli (strain K12).